The sequence spans 376 residues: N-acetyldiaminopimelate deacetylase (376 aa).

Asp-69 is a catalytic residue. Glu-127 serves as the catalytic Proton acceptor.

The protein belongs to the peptidase M20A family. N-acetyldiaminopimelate deacetylase subfamily.

It catalyses the reaction N-acetyl-(2S,6S)-2,6-diaminopimelate + H2O = (2S,6S)-2,6-diaminopimelate + acetate. The protein operates within amino-acid biosynthesis; L-lysine biosynthesis via DAP pathway; LL-2,6-diaminopimelate from (S)-tetrahydrodipicolinate (acetylase route): step 3/3. Catalyzes the conversion of N-acetyl-diaminopimelate to diaminopimelate and acetate. This is N-acetyldiaminopimelate deacetylase from Lactococcus lactis subsp. cremoris (strain SK11).